We begin with the raw amino-acid sequence, 545 residues long: 2-succinyl-5-enolpyruvyl-6-hydroxy-3-cyclohexene-1-carboxylate synthase (545 aa).

Residues 170–185 (QVSGLQRSAPAPSSDS) show a composition bias toward polar residues. The disordered stretch occupies residues 170-193 (QVSGLQRSAPAPSSDSPLGAAPQL).

It belongs to the TPP enzyme family. MenD subfamily. In terms of assembly, homodimer. The cofactor is Mg(2+). Mn(2+) serves as cofactor. Requires thiamine diphosphate as cofactor.

It carries out the reaction isochorismate + 2-oxoglutarate + H(+) = 5-enolpyruvoyl-6-hydroxy-2-succinyl-cyclohex-3-ene-1-carboxylate + CO2. Its pathway is quinol/quinone metabolism; 1,4-dihydroxy-2-naphthoate biosynthesis; 1,4-dihydroxy-2-naphthoate from chorismate: step 2/7. It functions in the pathway cofactor biosynthesis; phylloquinone biosynthesis. In terms of biological role, catalyzes the thiamine diphosphate-dependent decarboxylation of 2-oxoglutarate and the subsequent addition of the resulting succinic semialdehyde-thiamine pyrophosphate anion to isochorismate to yield 2-succinyl-5-enolpyruvyl-6-hydroxy-3-cyclohexene-1-carboxylate (SEPHCHC). In Parasynechococcus marenigrum (strain WH8102), this protein is 2-succinyl-5-enolpyruvyl-6-hydroxy-3-cyclohexene-1-carboxylate synthase.